A 508-amino-acid chain; its full sequence is Cyclic AMP-responsive element-binding protein 5 (508 aa).

The C2H2-type zinc finger occupies 16–40 (FVCSAPGCSQRFPTEDHLMIHRHKH). K50 participates in a covalent cross-link: Glycyl lysine isopeptide (Lys-Gly) (interchain with G-Cter in SUMO2). Phosphothreonine is present on residues T59 and T61. Phosphoserine is present on S137. Residues 265 to 391 (RQDQTPHHHM…LERNRAAATR (127 aa)) are disordered. 2 stretches are compositionally biased toward basic residues: residues 271-280 (HHHMHSHPHQ) and 289-326 (PYPH…HPAH). Over residues 337–346 (TGNQAQVSPA) the composition is skewed to polar residues. Residues 347-357 (TQQMQPTQTIQ) show a composition bias toward low complexity. Positions 369 to 386 (VVDEDPDERRRKFLERNR) are enriched in basic and acidic residues. Positions 375 to 438 (DERRRKFLER…AQLKQLLLTH (64 aa)) constitute a bZIP domain. Positions 377–397 (RRRKFLERNRAAATRCRQKRK) are basic motif. A leucine-zipper region spans residues 403–431 (LEKKAEELTQTNMQLQNEVSMLKNEVAQL). A disordered region spans residues 449-468 (ESQGYLSPESSPPASPVPAC).

The protein belongs to the bZIP family. Binds DNA as a homodimer or as a heterodimer with JUN or ATF2/CREBP1.

It localises to the nucleus. Its function is as follows. Binds to the cAMP response element and activates transcription. This is Cyclic AMP-responsive element-binding protein 5 (CREB5) from Homo sapiens (Human).